The following is a 431-amino-acid chain: tRNA(Ile)-lysidine synthase (431 aa).

26–31 serves as a coordination point for ATP; sequence SGGIDS.

This sequence belongs to the tRNA(Ile)-lysidine synthase family.

The protein resides in the cytoplasm. The enzyme catalyses cytidine(34) in tRNA(Ile2) + L-lysine + ATP = lysidine(34) in tRNA(Ile2) + AMP + diphosphate + H(+). Ligates lysine onto the cytidine present at position 34 of the AUA codon-specific tRNA(Ile) that contains the anticodon CAU, in an ATP-dependent manner. Cytidine is converted to lysidine, thus changing the amino acid specificity of the tRNA from methionine to isoleucine. The sequence is that of tRNA(Ile)-lysidine synthase from Wolbachia sp. subsp. Brugia malayi (strain TRS).